The following is a 172-amino-acid chain: MLIGVISDTHIPDRASEIPEAVFDAFRDVELILHAGDLTSPDILTELETLAPVECVQGNMDRHYGIETPRSRLFEIESFRVGLIHGEVYPRGDTQQLRYLGLELGADVLISGHTHQPFIRELEDMVLLNPGSPTVPRLTDPSVMVLRIDGEKLDAEIIRTGAPVCRSLNFRR.

Residues aspartate 8, histidine 10, aspartate 37, asparagine 59, histidine 85, histidine 113, and histidine 115 each contribute to the a divalent metal cation site.

This sequence belongs to the metallophosphoesterase superfamily. YfcE family. It depends on a divalent metal cation as a cofactor.

This is Probable metallophosphoesterase MTH_1774 from Methanothermobacter thermautotrophicus (strain ATCC 29096 / DSM 1053 / JCM 10044 / NBRC 100330 / Delta H) (Methanobacterium thermoautotrophicum).